The chain runs to 481 residues: tRNA-2-methylthio-N(6)-dimethylallyladenosine synthase (481 aa).

The MTTase N-terminal domain occupies 24–140; sequence KKLFIESYGC…LPNLLAEVEE (117 aa). 6 residues coordinate [4Fe-4S] cluster: cysteine 33, cysteine 69, cysteine 103, cysteine 178, cysteine 182, and cysteine 185. In terms of domain architecture, Radical SAM core spans 164 to 411; sequence MSNGITALVS…DLQQKHAWFR (248 aa). The 64-residue stretch at 413–476 folds into the TRAM domain; the sequence is EEFVGKTVEV…SGTLKGEAVG (64 aa).

The protein belongs to the methylthiotransferase family. MiaB subfamily. In terms of assembly, monomer. The cofactor is [4Fe-4S] cluster.

Its subcellular location is the cytoplasm. It carries out the reaction N(6)-dimethylallyladenosine(37) in tRNA + (sulfur carrier)-SH + AH2 + 2 S-adenosyl-L-methionine = 2-methylsulfanyl-N(6)-dimethylallyladenosine(37) in tRNA + (sulfur carrier)-H + 5'-deoxyadenosine + L-methionine + A + S-adenosyl-L-homocysteine + 2 H(+). Catalyzes the methylthiolation of N6-(dimethylallyl)adenosine (i(6)A), leading to the formation of 2-methylthio-N6-(dimethylallyl)adenosine (ms(2)i(6)A) at position 37 in tRNAs that read codons beginning with uridine. The chain is tRNA-2-methylthio-N(6)-dimethylallyladenosine synthase from Flavobacterium johnsoniae (strain ATCC 17061 / DSM 2064 / JCM 8514 / BCRC 14874 / CCUG 350202 / NBRC 14942 / NCIMB 11054 / UW101) (Cytophaga johnsonae).